The chain runs to 549 residues: Oxygen-dependent choline dehydrogenase (549 aa).

4-33 serves as a coordination point for FAD; sequence DFVIIGSGSAGSAMAYRLSEDGRYSVIVIE. The active-site Proton acceptor is His-465.

This sequence belongs to the GMC oxidoreductase family. FAD serves as cofactor.

The enzyme catalyses choline + A = betaine aldehyde + AH2. It carries out the reaction betaine aldehyde + NAD(+) + H2O = glycine betaine + NADH + 2 H(+). It participates in amine and polyamine biosynthesis; betaine biosynthesis via choline pathway; betaine aldehyde from choline (cytochrome c reductase route): step 1/1. Its function is as follows. Involved in the biosynthesis of the osmoprotectant glycine betaine. Catalyzes the oxidation of choline to betaine aldehyde and betaine aldehyde to glycine betaine at the same rate. In Brucella ovis (strain ATCC 25840 / 63/290 / NCTC 10512), this protein is Oxygen-dependent choline dehydrogenase.